The following is a 456-amino-acid chain: Probable multidrug resistance protein NorM (456 aa).

12 helical membrane passes run 13–34 (QFLT…MTFF), 54–76 (SSFW…PIIA), 95–117 (LYIA…PMIL), 132–154 (HFLN…RSFI), 161–183 (RVTM…CFIF), 193–215 (GAGS…VILI), 244–266 (IGVP…TILM), 286–308 (LLYA…ETGA), 321–343 (GMAA…RDII), 358–380 (MHFL…VLGA), 387–409 (VTVT…GYGL), and 414–436 (LGPF…ILSI).

The protein belongs to the multi antimicrobial extrusion (MATE) (TC 2.A.66.1) family.

Its subcellular location is the cell membrane. Its function is as follows. Multidrug efflux pump. This chain is Probable multidrug resistance protein NorM (norM), found in Listeria monocytogenes serovar 1/2a (strain ATCC BAA-679 / EGD-e).